The sequence spans 21 residues: LKVPDLPLPESYXXALNLAXD.

In terms of tissue distribution, expressed by the venom gland.

The protein resides in the secreted. The protein is Scolopendra 7997.01 Da toxin of Scolopendra viridicornis nigra (Brazilian giant centipede).